Consider the following 292-residue polypeptide: Hydroxysqualene synthase (292 aa).

This sequence belongs to the phytoene/squalene synthase family. HpnC subfamily.

It carries out the reaction presqualene diphosphate + H2O = hydroxysqualene + diphosphate. Its pathway is secondary metabolite biosynthesis; hopanoid biosynthesis. Involved in the biosynthesis of the hopanoid precursor squalene (SQ) from farnesyl diphosphate (FPP). Catalyzes the second step, the conversion of presqualene diphosphate (PSPP) to hydroxysqualene (HSQ). The polypeptide is Hydroxysqualene synthase (Rhodopseudomonas palustris (strain ATCC BAA-98 / CGA009)).